A 394-amino-acid chain; its full sequence is S-adenosylmethionine synthase 2 (394 aa).

Glu11 is a binding site for Mg(2+). Position 17 (His17) interacts with ATP. Glu45 provides a ligand contact to K(+). L-methionine-binding residues include Glu58 and Gln101. ATP contacts are provided by residues Asp169–Lys171, Ser237–Phe240, Asp248, Arg254–Lys255, Ala271, Lys275, and Lys279. Asp248 contributes to the L-methionine binding site. Residue Lys279 coordinates L-methionine.

The protein belongs to the AdoMet synthase family. In terms of assembly, homotetramer. Mn(2+) is required as a cofactor. Mg(2+) serves as cofactor. It depends on Co(2+) as a cofactor. Requires K(+) as cofactor.

It localises to the cytoplasm. The enzyme catalyses L-methionine + ATP + H2O = S-adenosyl-L-methionine + phosphate + diphosphate. It participates in amino-acid biosynthesis; S-adenosyl-L-methionine biosynthesis; S-adenosyl-L-methionine from L-methionine: step 1/1. In terms of biological role, catalyzes the formation of S-adenosylmethionine from methionine and ATP. The reaction comprises two steps that are both catalyzed by the same enzyme: formation of S-adenosylmethionine (AdoMet) and triphosphate, and subsequent hydrolysis of the triphosphate. This Oryza sativa subsp. japonica (Rice) protein is S-adenosylmethionine synthase 2 (SAM2).